A 146-amino-acid chain; its full sequence is Putative pre-16S rRNA nuclease (146 aa).

It belongs to the YqgF nuclease family.

Its subcellular location is the cytoplasm. Could be a nuclease involved in processing of the 5'-end of pre-16S rRNA. The protein is Putative pre-16S rRNA nuclease of Paraburkholderia phytofirmans (strain DSM 17436 / LMG 22146 / PsJN) (Burkholderia phytofirmans).